The chain runs to 627 residues: 2-oxoacid:ferredoxin oxidoreductase 1, subunit alpha (627 aa).

Residues 253-257 carry the YPITP motif motif; that stretch reads YPITP. Thr-256 and Arg-344 together coordinate substrate.

Heterodimer composed of an alpha and a beta subunit.

The catalysed reaction is a 2-oxocarboxylate + 2 oxidized [2Fe-2S]-[ferredoxin] + CoA = an acyl-CoA + 2 reduced [2Fe-2S]-[ferredoxin] + CO2 + H(+). Inhibited by low concentration of 4-fluoro-7-nitrobenzofurazan (NBD-F). Catalyzes the coenzyme A-dependent oxidative decarboxylation of different 2-oxoacids such as 2-oxoglutarate, pyruvate and 2-oxobutyrate to form their CoA derivatives. The sequence is that of 2-oxoacid:ferredoxin oxidoreductase 1, subunit alpha from Sulfurisphaera tokodaii (strain DSM 16993 / JCM 10545 / NBRC 100140 / 7) (Sulfolobus tokodaii).